The sequence spans 956 residues: Bromodomain testis-specific protein (956 aa).

The region spanning 26-132 (RLTNQLQFLQ…KLFMQKLSQM (107 aa)) is the Bromo 1 domain. Residue Ser186 is modified to Phosphoserine. Positions 208–219 (KGVKRRADTTTP) match the Nuclear localization signal motif. Positions 210–239 (VKRRADTTTPTTSIAKASSESPPTLRETKP) are disordered. A compositionally biased stretch (polar residues) spans 216 to 231 (TTTPTTSIAKASSESP). Residues 266-375 (VKVTEQLKHC…DVFELHFAKI (110 aa)) enclose the Bromo 2 domain. Disordered stretches follow at residues 391–420 (NSAQALSRESSSEASSGDASSEDSEDERVQ), 442–508 (VPLR…PMNY), 607–747 (NQLN…HSQQ), and 859–934 (LEHN…RREA). Residues 392-409 (SAQALSRESSSEASSGDA) show a composition bias toward low complexity. Residues 417 to 442 (ERVQHLAKLQEQLNAVHQQLQVLSQV) adopt a coiled-coil conformation. Residues 445 to 463 (RKLKKKNEKSKRAPKRKKV) are compositionally biased toward basic residues. The region spanning 496-578 (KSEEEDNAKP…ACLRKRSLKP (83 aa)) is the NET domain. The segment covering 625-640 (PPPPPPPPPPPPPPPE) has biased composition (pro residues). A compositionally biased stretch (low complexity) spans 649–688 (DSSSSSGSGSGSSSSSSGSSSSSSSSGSASSSSDSSSSDS). Over residues 714–724 (KQIQSSVQDIT) the composition is skewed to polar residues. Positions 844–940 (EKEVKARTQE…RREAMAGTID (97 aa)) form a coiled coil. 2 stretches are compositionally biased toward basic and acidic residues: residues 859-874 (LEHNAKDPKVSQENQR) and 915-934 (LLKDRNLAREKEQERRRREA).

Belongs to the BET family. As to quaternary structure, interacts with SMARCE1. Interacts with mRNA splicing machinery proteins SRSF2, DDX5, HNRNPK and TARDBP. Interacts with the acetylated N-terminus of histone H1, H2, H3 and H4. Interacts with P-TEFb components CDK9 and CCNT1/cyclin-T1. Post-translationally, ubiquitinated in a SPOP-dependent manner, leading to proteasomal degradation. Testis-specific. Expressed in germinal cells from the early meiotic (pachytene) spermatocytes and during spermiogenesis in the round and elongating spermatids until the condensed late spermatids. No expression seen in spermatogonia.

It localises to the nucleus. In terms of biological role, testis-specific chromatin protein that specifically binds histone H4 acetylated at 'Lys-5' and 'Lys-8' (H4K5ac and H4K8ac, respectively) and plays a key role in spermatogenesis. Required in late pachytene spermatocytes: plays a role in meiotic and post-meiotic cells by binding to acetylated histones at the promoter of specific meiotic and post-meiotic genes, facilitating their activation at the appropriate time. In the post-meiotic phase of spermatogenesis, binds to hyperacetylated histones and participates in their general removal from DNA. Also recognizes and binds a subset of butyrylated histones: able to bind histone H4 butyrylated at 'Lys-8' (H4K8ac), while it is not able to bind H4 butyrylated at 'Lys-5' (H4K5ac). Also acts as a component of the splicing machinery in pachytene spermatocytes and round spermatids and participates in 3'-UTR truncation of specific mRNAs in post-meiotic spermatids. Required for chromocenter organization, a structure comprised of peri-centromeric heterochromatin. The polypeptide is Bromodomain testis-specific protein (Brdt) (Mus musculus (Mouse)).